The sequence spans 333 residues: Probable tRNA-dihydrouridine synthase 1 (333 aa).

Residues 17-19 (PMA) and Gln-71 contribute to the FMN site. The active-site Proton donor is Cys-102. FMN contacts are provided by residues Lys-141, 202–204 (NGD), and 226–227 (GR).

This sequence belongs to the Dus family. Requires FMN as cofactor.

It carries out the reaction a 5,6-dihydrouridine in tRNA + NAD(+) = a uridine in tRNA + NADH + H(+). The catalysed reaction is a 5,6-dihydrouridine in tRNA + NADP(+) = a uridine in tRNA + NADPH + H(+). Catalyzes the synthesis of 5,6-dihydrouridine (D), a modified base found in the D-loop of most tRNAs, via the reduction of the C5-C6 double bond in target uridines. This is Probable tRNA-dihydrouridine synthase 1 (dus1) from Bacillus subtilis (strain 168).